The sequence spans 386 residues: Succinate--CoA ligase [ADP-forming] subunit beta (386 aa).

Positions 9 to 244 (KELLREFGVA…TTEEDPREVE (236 aa)) constitute an ATP-grasp domain. ATP-binding positions include K46, 53-55 (GRG), E99, S102, and E107. Positions 199 and 213 each coordinate Mg(2+). Residues N264 and 321 to 323 (GIM) contribute to the substrate site.

It belongs to the succinate/malate CoA ligase beta subunit family. Heterotetramer of two alpha and two beta subunits. It depends on Mg(2+) as a cofactor.

It catalyses the reaction succinate + ATP + CoA = succinyl-CoA + ADP + phosphate. It carries out the reaction GTP + succinate + CoA = succinyl-CoA + GDP + phosphate. It functions in the pathway carbohydrate metabolism; tricarboxylic acid cycle; succinate from succinyl-CoA (ligase route): step 1/1. Its function is as follows. Succinyl-CoA synthetase functions in the citric acid cycle (TCA), coupling the hydrolysis of succinyl-CoA to the synthesis of either ATP or GTP and thus represents the only step of substrate-level phosphorylation in the TCA. The beta subunit provides nucleotide specificity of the enzyme and binds the substrate succinate, while the binding sites for coenzyme A and phosphate are found in the alpha subunit. This chain is Succinate--CoA ligase [ADP-forming] subunit beta, found in Exiguobacterium sp. (strain ATCC BAA-1283 / AT1b).